A 621-amino-acid polypeptide reads, in one-letter code: Elongation factor 4 (621 aa).

The 183-residue stretch at 21–203 (DLIRNICIIA…AIVKRVPPPK (183 aa)) folds into the tr-type G domain. GTP-binding positions include 33-38 (DHGKTT) and 150-153 (NKID).

Belongs to the TRAFAC class translation factor GTPase superfamily. Classic translation factor GTPase family. LepA subfamily.

It is found in the cell inner membrane. It catalyses the reaction GTP + H2O = GDP + phosphate + H(+). In terms of biological role, required for accurate and efficient protein synthesis under certain stress conditions. May act as a fidelity factor of the translation reaction, by catalyzing a one-codon backward translocation of tRNAs on improperly translocated ribosomes. Back-translocation proceeds from a post-translocation (POST) complex to a pre-translocation (PRE) complex, thus giving elongation factor G a second chance to translocate the tRNAs correctly. Binds to ribosomes in a GTP-dependent manner. In Thermotoga maritima (strain ATCC 43589 / DSM 3109 / JCM 10099 / NBRC 100826 / MSB8), this protein is Elongation factor 4.